The chain runs to 672 residues: COBRA-like protein 10 (672 aa).

The signal sequence occupies residues M1–G35. N-linked (GlcNAc...) asparagine glycosylation is found at N79, N135, N264, N328, N339, N368, N422, N442, N483, N562, N570, and N589. The 106-residue stretch at K502–I607 folds into the CBM2 domain. The GPI-anchor amidated serine moiety is linked to residue S646. Residues S647–D672 constitute a propeptide, removed in mature form. Positions I664–D672 match the Required for processing by the PIG complex, a critical step for apical plasma membrane localization in pollen tubes motif.

It belongs to the COBRA family. The GPI-anchor attachment at Ser-646 requires APTG1. As to expression, expressed in roots, stems, leaves, flowers and siliques. Specific expression in the pollen tube.

It is found in the cell membrane. It localises to the cytoplasm. Its subcellular location is the vesicle. Functionally, involved in the deposition of apical pectin cap and cellulose microfibrils in pollen tubes. Not essential for pollen development, hydration or germination, but required for pollen tubes growth in the female transmitting tract of pistil and toward micropyles, via the perception of ovule guidance cues. The protein is COBRA-like protein 10 of Arabidopsis thaliana (Mouse-ear cress).